The following is a 131-amino-acid chain: ATP synthase epsilon chain (131 aa).

This sequence belongs to the ATPase epsilon chain family. F-type ATPases have 2 components, CF(1) - the catalytic core - and CF(0) - the membrane proton channel. CF(1) has five subunits: alpha(3), beta(3), gamma(1), delta(1), epsilon(1). CF(0) has three main subunits: a, b and c.

The protein localises to the cell membrane. Its function is as follows. Produces ATP from ADP in the presence of a proton gradient across the membrane. The sequence is that of ATP synthase epsilon chain from Bacillus licheniformis (strain ATCC 14580 / DSM 13 / JCM 2505 / CCUG 7422 / NBRC 12200 / NCIMB 9375 / NCTC 10341 / NRRL NRS-1264 / Gibson 46).